The chain runs to 65 residues: Neurotoxin BmK AGAP-SYPU2 (65 aa).

The region spanning 2–64 (KDGYIVDDKN…VPIRVPGRCN (63 aa)) is the LCN-type CS-alpha/beta domain. 4 cysteine pairs are disulfide-bonded: C12–C63, C16–C36, C22–C46, and C26–C48.

As to expression, expressed by the venom gland.

Its subcellular location is the secreted. Functionally, alpha toxins bind voltage-independently at site-3 of sodium channels and inhibit the inactivation of the activated channels, thereby blocking neuronal transmission. In vivo, shows analgesic activity (ED(50) is 1.42 mg/kg) and antitumor activity against Ehrlich ascites tumor and S-180 fibrosarcoma models. The chain is Neurotoxin BmK AGAP-SYPU2 from Olivierus martensii (Manchurian scorpion).